A 78-amino-acid chain; its full sequence is Translational regulator CsrA (78 aa).

The protein belongs to the CsrA/RsmA family. In terms of assembly, homodimer; the beta-strands of each monomer intercalate to form a hydrophobic core, while the alpha-helices form wings that extend away from the core.

It is found in the cytoplasm. In terms of biological role, a translational regulator that binds mRNA to regulate translation initiation and/or mRNA stability. Usually binds in the 5'-UTR at or near the Shine-Dalgarno sequence preventing ribosome-binding, thus repressing translation. Its main target seems to be the major flagellin gene, while its function is anatagonized by FliW. This chain is Translational regulator CsrA, found in Desulfotalea psychrophila (strain LSv54 / DSM 12343).